The sequence spans 238 residues: 1-(5-phosphoribosyl)-5-[(5-phosphoribosylamino)methylideneamino] imidazole-4-carboxamide isomerase (238 aa).

Residue D7 is the Proton acceptor of the active site. Residue D129 is the Proton donor of the active site.

The protein belongs to the HisA/HisF family.

The protein localises to the cytoplasm. The catalysed reaction is 1-(5-phospho-beta-D-ribosyl)-5-[(5-phospho-beta-D-ribosylamino)methylideneamino]imidazole-4-carboxamide = 5-[(5-phospho-1-deoxy-D-ribulos-1-ylimino)methylamino]-1-(5-phospho-beta-D-ribosyl)imidazole-4-carboxamide. Its pathway is amino-acid biosynthesis; L-histidine biosynthesis; L-histidine from 5-phospho-alpha-D-ribose 1-diphosphate: step 4/9. In Leuconostoc mesenteroides subsp. mesenteroides (strain ATCC 8293 / DSM 20343 / BCRC 11652 / CCM 1803 / JCM 6124 / NCDO 523 / NBRC 100496 / NCIMB 8023 / NCTC 12954 / NRRL B-1118 / 37Y), this protein is 1-(5-phosphoribosyl)-5-[(5-phosphoribosylamino)methylideneamino] imidazole-4-carboxamide isomerase.